Here is a 304-residue protein sequence, read N- to C-terminus: N-acetylmuramic acid 6-phosphate etherase (304 aa).

Positions 62–225 (IVQAFQNGGR…TTASMVMIGK (164 aa)) constitute an SIS domain. Glutamate 90 (proton donor) is an active-site residue. Residue glutamate 121 is part of the active site.

Belongs to the GCKR-like family. MurNAc-6-P etherase subfamily. In terms of assembly, homodimer.

It catalyses the reaction N-acetyl-D-muramate 6-phosphate + H2O = N-acetyl-D-glucosamine 6-phosphate + (R)-lactate. The protein operates within amino-sugar metabolism; 1,6-anhydro-N-acetylmuramate degradation. Its pathway is amino-sugar metabolism; N-acetylmuramate degradation. It functions in the pathway cell wall biogenesis; peptidoglycan recycling. Functionally, specifically catalyzes the cleavage of the D-lactyl ether substituent of MurNAc 6-phosphate, producing GlcNAc 6-phosphate and D-lactate. Together with AnmK, is also required for the utilization of anhydro-N-acetylmuramic acid (anhMurNAc) either imported from the medium or derived from its own cell wall murein, and thus plays a role in cell wall recycling. In Actinobacillus pleuropneumoniae serotype 5b (strain L20), this protein is N-acetylmuramic acid 6-phosphate etherase.